The sequence spans 455 residues: Tyramine receptor Ser-2 (455 aa).

Residues 1-60 are Extracellular-facing; the sequence is MFRNYTDSVQEMVLRAIDSIRDSVINASSAVSTTTLPPLDIPMTSMKPPSIIPTVELVLG. Residues Asn4 and Asn26 are each glycosylated (N-linked (GlcNAc...) asparagine). Residues 61–83 form a helical membrane-spanning segment; the sequence is TITYLVIIAMTVVGNTLVVVAVF. The Cytoplasmic portion of the chain corresponds to 84 to 93; sequence SYRPLKKVQN. The helical transmembrane segment at 94–115 threads the bilayer; the sequence is YFLVSLAASDLAVAIFVMPLHV. At 116–133 the chain is on the extracellular side; that stretch reads VTFLAGGKWLLGVTVCQF. A disulfide bridge connects residues Cys131 and Cys209. A helical transmembrane segment spans residues 134–154; the sequence is FTTADILLCTSSILNLCAIAL. Residues 155–174 lie on the Cytoplasmic side of the membrane; that stretch reads DRYWAIHNPINYAQKRTTKF. A helical membrane pass occupies residues 175-197; the sequence is VCIVIVIVWILSMLISVPPIIGW. The Extracellular portion of the chain corresponds to 198-221; sequence NNWQENMMEDSCGLSTEKAFVVFS. Residues 222 to 243 traverse the membrane as a helical segment; the sequence is AAGSFFLPLLVMVVVYVKIFIS. The Cytoplasmic segment spans residues 244–370; it reads ARQRIRTNRG…VAKEKRAAKT (127 aa). Residues 371 to 392 form a helical membrane-spanning segment; that stretch reads IAVIIFVFSFCWLPFFVAYVIR. The Extracellular segment spans residues 393-407; sequence PFCETCKLHAKVEQA. Residues 408 to 428 form a helical membrane-spanning segment; that stretch reads FTWLGYINSSLNPFLYGILNL. The Cytoplasmic segment spans residues 429–455; the sequence is EFRRAFKKILCPKAVLEQRRRRMSAQP.

This sequence belongs to the G-protein coupled receptor 1 family. In terms of tissue distribution, the different isoforms are expressed in specific, but overlapping sets of sensory, inter- and motor neurons, including AIY, AIZ and RIA interneurons. They are also expressed in pharyngeal cells, head muscles and excretory gland cells.

It is found in the cell membrane. G-protein coupled receptor for tyramine, a known neurotransmitter and neuromodulator and direct precursor of octopamine. The rank order of potency is tyramine &gt; octopamine &gt; dopamine &gt; serotonin &gt; epinephrine = norepinephrine. In Caenorhabditis elegans, this protein is Tyramine receptor Ser-2 (ser-2).